The sequence spans 104 residues: Large ribosomal subunit protein uL24 (104 aa).

This sequence belongs to the universal ribosomal protein uL24 family. In terms of assembly, part of the 50S ribosomal subunit.

One of two assembly initiator proteins, it binds directly to the 5'-end of the 23S rRNA, where it nucleates assembly of the 50S subunit. Its function is as follows. One of the proteins that surrounds the polypeptide exit tunnel on the outside of the subunit. In Mesorhizobium japonicum (strain LMG 29417 / CECT 9101 / MAFF 303099) (Mesorhizobium loti (strain MAFF 303099)), this protein is Large ribosomal subunit protein uL24.